Reading from the N-terminus, the 293-residue chain is Zinc finger protein 80 (293 aa).

2 consecutive C2H2-type zinc fingers follow at residues 69–91 and 97–119; these read YKCK…HQIH and YECQ…MRIH. Residues 125 to 147 form a C2H2-type 3; atypical zinc finger; it reads CKCVECGKVFNRRSHLLCYHQIH. 4 consecutive C2H2-type zinc fingers follow at residues 153–175, 181–203, 209–231, and 237–259; these read YECS…RMTH, FGCK…MKIH, YKCG…SMTH, and YECK…TRSH.

The protein belongs to the krueppel C2H2-type zinc-finger protein family.

It is found in the nucleus. May be involved in transcriptional regulation. In Macaca mulatta (Rhesus macaque), this protein is Zinc finger protein 80 (ZNF80).